A 71-amino-acid polypeptide reads, in one-letter code: Omega-conotoxin-like CnVIIE (71 aa).

Residues 1–22 form the signal peptide; sequence MKLTCVVIVAVLLLTACQLITA. Residues 23–45 constitute a propeptide that is removed on maturation; sequence DDSRGTQKHRALRSDTKLSMSTR. 3 disulfides stabilise this stretch: Cys-46–Cys-61, Cys-53–Cys-65, and Cys-60–Cys-70. The residue at position 52 (Pro-52) is a 4-hydroxyproline; partial. The residue at position 70 (Cys-70) is a Cysteine amide.

The protein belongs to the conotoxin M superfamily. In terms of tissue distribution, expressed by the venom duct.

The protein resides in the secreted. Functionally, omega-conotoxins act at presynaptic membranes, they bind and block voltage-gated calcium channels (Cav). In Conus consors (Singed cone), this protein is Omega-conotoxin-like CnVIIE.